The following is a 274-amino-acid chain: 4-diphosphocytidyl-2-C-methyl-D-erythritol kinase (274 aa).

K8 is a catalytic residue. 92-102 (PSGAGLGGGSS) is a binding site for ATP. The active site involves D134.

The protein belongs to the GHMP kinase family. IspE subfamily.

It carries out the reaction 4-CDP-2-C-methyl-D-erythritol + ATP = 4-CDP-2-C-methyl-D-erythritol 2-phosphate + ADP + H(+). It functions in the pathway isoprenoid biosynthesis; isopentenyl diphosphate biosynthesis via DXP pathway; isopentenyl diphosphate from 1-deoxy-D-xylulose 5-phosphate: step 3/6. Catalyzes the phosphorylation of the position 2 hydroxy group of 4-diphosphocytidyl-2C-methyl-D-erythritol. The chain is 4-diphosphocytidyl-2-C-methyl-D-erythritol kinase from Porphyromonas gingivalis (strain ATCC 33277 / DSM 20709 / CIP 103683 / JCM 12257 / NCTC 11834 / 2561).